Reading from the N-terminus, the 385-residue chain is Xanthosine methyltransferase 2 (385 aa).

An S-adenosyl-L-homocysteine-binding site is contributed by tyrosine 18. Xanthosine contacts are provided by asparagine 21 and asparagine 25. S-adenosyl-L-homocysteine contacts are provided by cysteine 62, asparagine 67, aspartate 101, leucine 102, serine 140, phenylalanine 141, and cysteine 157. Tyrosine 158 lines the xanthosine pocket. Residue cysteine 159 participates in S-adenosyl-L-homocysteine binding. Positions 161 and 162 each coordinate xanthosine. Positions 179, 261, 263, and 264 each coordinate Mg(2+). Positions 329, 334, and 369 each coordinate xanthosine.

This sequence belongs to the methyltransferase superfamily. Type-7 methyltransferase family. Mg(2+) is required as a cofactor. Expressed at low levels in young leaves but not in mature leaves. Barely detectable in fruits (grains).

The enzyme catalyses xanthosine + S-adenosyl-L-methionine = 7-methylxanthosine + S-adenosyl-L-homocysteine. It participates in alkaloid biosynthesis. Involved in the biosynthesis of caffeine. Specific for xanthosine and could not use xanthosine 5'-monophosphate (XMP) as substrate. Catalyzes the 7-N-methylation activity of xanthosine, but does not have 1-N- or 3-N-methylation activity. The protein is Xanthosine methyltransferase 2 of Coffea arabica (Arabian coffee).